The primary structure comprises 212 residues: uncharacterized protein (212 aa).

S-adenosyl-L-methionine-binding residues include G53, E74, and D97.

Belongs to the methyltransferase superfamily. YrrT family.

Functionally, could be a S-adenosyl-L-methionine-dependent methyltransferase. This is an uncharacterized protein from Bacillus cereus (strain ATCC 14579 / DSM 31 / CCUG 7414 / JCM 2152 / NBRC 15305 / NCIMB 9373 / NCTC 2599 / NRRL B-3711).